The following is a 155-amino-acid chain: MSARSCSQNARTIFELCDECNITLPTLQIGCIFCKKWLLTTEVLSFAFRDLRVVWRDGYPFAACLACLQFHGKISQYRHFDYAAYADTVEEETKQTVFDLCIRCCKCHKPLSPVEKVQHIVQKAQFFKIHSVWKGYCLHCWKSCMEKRRRSETMC.

2 zinc fingers span residues 31–67 (CIFC…CLAC) and 104–140 (CCKC…CLHC).

It belongs to the papillomaviridae E6 protein family. Forms homodimers. Interacts with ubiquitin-protein ligase UBE3A/E6-AP; this interaction stimulates UBE3A ubiquitin activity. Interacts with host TP53 and EP300; this interaction inhibits TP53 activity.

It localises to the host cytoplasm. Its subcellular location is the host nucleus. In terms of biological role, this protein may be involved in the oncogenic potential of this virus (cervical neoplasia-associated virus). Its function is as follows. Plays a major role in the induction and maintenance of cellular transformation. E6 associates with host UBE3A/E6-AP ubiquitin-protein ligase and modulates its activity. Sequesters tumor suppressor TP53 in the host cytoplasm and modulates its activity by interacting with host EP300 that results in the reduction of TP53 acetylation and activation. In turn, apoptosis induced by DNA damage is inhibited. E6 also protects host keratinocytes from apoptosis by mediating the degradation of host BAK1. May also inhibit host immune response. The protein is Protein E6 of Human papillomavirus 43.